Reading from the N-terminus, the 452-residue chain is Phosphoglucosamine mutase (452 aa).

Catalysis depends on S103, which acts as the Phosphoserine intermediate. Mg(2+)-binding residues include S103, D244, D246, and D248. S103 is modified (phosphoserine).

Belongs to the phosphohexose mutase family. The cofactor is Mg(2+). Activated by phosphorylation.

It carries out the reaction alpha-D-glucosamine 1-phosphate = D-glucosamine 6-phosphate. In terms of biological role, catalyzes the conversion of glucosamine-6-phosphate to glucosamine-1-phosphate. In Fusobacterium nucleatum subsp. nucleatum (strain ATCC 25586 / DSM 15643 / BCRC 10681 / CIP 101130 / JCM 8532 / KCTC 2640 / LMG 13131 / VPI 4355), this protein is Phosphoglucosamine mutase.